Here is a 160-residue protein sequence, read N- to C-terminus: uncharacterized protein (160 aa).

The RING-type zinc finger occupies 8–46 (CAVCLDFFVEPCIIECGHSYCRFCIESHLNINEKCPLCR).

This is an uncharacterized protein from Caenorhabditis elegans.